We begin with the raw amino-acid sequence, 787 residues long: Pleckstrin homology domain-containing family G member 6 (787 aa).

The 193-residue stretch at 161–353 (HQQEALWELL…ESFLRHINGQ (193 aa)) folds into the DH domain. The PH domain occupies 409 to 509 (QLLLEGPVRV…WLEKTQHAQT (101 aa)). Residues 533-762 (QGTESPSTRP…EPGNGKPRRL (230 aa)) form a disordered region. The segment covering 535-557 (TESPSTRPSTPSPSPEDSQSSAE) has biased composition (low complexity). The span at 724-742 (LRPRSLREDMLREIREELA) shows a compositional bias: basic and acidic residues.

Interacts with MYH10. Interacts with ELMO1 and EZR (in an open conformation). Interacts with CSPP1.

The protein resides in the cell projection. It localises to the microvillus. Its subcellular location is the cytoplasm. It is found in the cytoskeleton. The protein localises to the spindle. The protein resides in the cleavage furrow. Guanine nucleotide exchange factor activating the small GTPase RHOA, which, in turn, induces myosin filament formation. Also activates RHOG. Does not activate RAC1, or to a much lower extent than RHOA and RHOG. Part of a functional unit, involving PLEKHG6, MYH10 and RHOA, at the cleavage furrow to advance furrow ingression during cytokinesis. In epithelial cells, required for the formation of microvilli and membrane ruffles on the apical pole. Along with EZR, required for normal macropinocytosis. The polypeptide is Pleckstrin homology domain-containing family G member 6 (Plekhg6) (Mus musculus (Mouse)).